Here is a 344-residue protein sequence, read N- to C-terminus: Protein-arginine kinase (344 aa).

Positions I14–A244 constitute a Phosphagen kinase C-terminal domain. ATP-binding positions include S17–R21, H81, R115, R166–M170, and R197–E202.

It belongs to the ATP:guanido phosphotransferase family.

It catalyses the reaction L-arginyl-[protein] + ATP = N(omega)-phospho-L-arginyl-[protein] + ADP + H(+). Catalyzes the specific phosphorylation of arginine residues in proteins. This Clostridium novyi (strain NT) protein is Protein-arginine kinase.